Here is a 410-residue protein sequence, read N- to C-terminus: Scarecrow-like protein 32 (410 aa).

A GRAS domain is found at 18-408; that stretch reads LRGCGDANFM…HSVVFATVWV (391 aa). Residues 25–88 are leucine repeat I (LRI); sequence NFMEQLLLHC…AVSKTPTLSS (64 aa). The tract at residues 107–188 is VHIID; it reads LAAFVDLTPW…HFPPFINISY (82 aa). The VHIID signature appears at 138-142; it reads VHIVD. The segment at 190–227 is leucine repeat II (LRII); that stretch reads ELGSKLVNFATTRNITMEFTIVPSTYSDGFSSLLQQLR. Residues 237–329 form a PFYRE region; that stretch reads LVVNCHMMLR…EAEISWKIEN (93 aa). Positions 332 to 408 are SAW; the sequence is AKEGAERVER…HSVVFATVWV (77 aa).

It belongs to the GRAS family. Expressed in seedlings, leaves and flowers.

The protein localises to the nucleus. In terms of biological role, probable transcription factor involved in plant development. This is Scarecrow-like protein 32 (SCL32) from Arabidopsis thaliana (Mouse-ear cress).